The sequence spans 221 residues: Carbonic anhydrase (221 aa).

Residues cysteine 57, aspartate 59, histidine 112, and cysteine 115 each coordinate Zn(2+).

This sequence belongs to the beta-class carbonic anhydrase family. Zn(2+) is required as a cofactor.

The protein localises to the cytoplasm. It localises to the nucleus. It is found in the mitochondrion intermembrane space. It catalyses the reaction hydrogencarbonate + H(+) = CO2 + H2O. In terms of biological role, catalyzes the reversible hydration of CO(2) to H(2)CO(3). The main role may be to provide inorganic carbon for the bicarbonate-dependent carboxylation reactions catalyzed by pyruvate carboxylase, acetyl-CoA carboxylase and carbamoyl-phosphate synthetase. Involved in protection against oxidative damage. Encodes a substrate for the non-classical protein export pathway for proteins that lack a cleavable signal sequence. The polypeptide is Carbonic anhydrase (NCE103) (Saccharomyces cerevisiae (strain ATCC 204508 / S288c) (Baker's yeast)).